We begin with the raw amino-acid sequence, 591 residues long: Aspartate--tRNA(Asp/Asn) ligase (591 aa).

Residue Glu-176 coordinates L-aspartate. The interval 200–203 (QLFK) is aspartate. Arg-222 lines the L-aspartate pocket. ATP contacts are provided by residues 222-224 (RDE) and Gln-231. His-450 contributes to the L-aspartate binding site. Residue Glu-484 coordinates ATP. Residue Arg-491 coordinates L-aspartate. 536-539 (GLDR) is a binding site for ATP.

Belongs to the class-II aminoacyl-tRNA synthetase family. Type 1 subfamily. In terms of assembly, homodimer.

The protein localises to the cytoplasm. It catalyses the reaction tRNA(Asx) + L-aspartate + ATP = L-aspartyl-tRNA(Asx) + AMP + diphosphate. In terms of biological role, aspartyl-tRNA synthetase with relaxed tRNA specificity since it is able to aspartylate not only its cognate tRNA(Asp) but also tRNA(Asn). Reaction proceeds in two steps: L-aspartate is first activated by ATP to form Asp-AMP and then transferred to the acceptor end of tRNA(Asp/Asn). This Bacillus cereus (strain AH187) protein is Aspartate--tRNA(Asp/Asn) ligase.